An 85-amino-acid polypeptide reads, in one-letter code: Large ribosomal subunit protein bL27 (85 aa).

The segment at 1 to 22 (MAHKKAGGSTRNGRDSESKRLG) is disordered.

This sequence belongs to the bacterial ribosomal protein bL27 family.

In Teredinibacter turnerae (strain ATCC 39867 / T7901), this protein is Large ribosomal subunit protein bL27.